We begin with the raw amino-acid sequence, 468 residues long: Sulfate adenylyltransferase subunit 1 (468 aa).

Residues 22-239 (KELLRFLTCG…TVEIASDKNA (218 aa)) enclose the tr-type G domain. A G1 region spans residues 31–38 (GSVDDGKS). GTP is bound at residue 31–38 (GSVDDGKS). The tract at residues 89-93 (GITID) is G2. Positions 110 to 113 (DTPG) are G3. GTP contacts are provided by residues 110-114 (DTPGH) and 165-168 (NKMD). Positions 165–168 (NKMD) are G4. Positions 202–204 (SAL) are G5.

Belongs to the TRAFAC class translation factor GTPase superfamily. Classic translation factor GTPase family. CysN/NodQ subfamily. In terms of assembly, heterodimer composed of CysD, the smaller subunit, and CysN.

It carries out the reaction sulfate + ATP + H(+) = adenosine 5'-phosphosulfate + diphosphate. It participates in sulfur metabolism; hydrogen sulfide biosynthesis; sulfite from sulfate: step 1/3. With CysD forms the ATP sulfurylase (ATPS) that catalyzes the adenylation of sulfate producing adenosine 5'-phosphosulfate (APS) and diphosphate, the first enzymatic step in sulfur assimilation pathway. APS synthesis involves the formation of a high-energy phosphoric-sulfuric acid anhydride bond driven by GTP hydrolysis by CysN coupled to ATP hydrolysis by CysD. This is Sulfate adenylyltransferase subunit 1 from Teredinibacter turnerae (strain ATCC 39867 / T7901).